Reading from the N-terminus, the 247-residue chain is Malonyl-[acyl-carrier protein] O-methyltransferase (247 aa).

Belongs to the methyltransferase superfamily.

It catalyses the reaction malonyl-[ACP] + S-adenosyl-L-methionine = malonyl-[ACP] methyl ester + S-adenosyl-L-homocysteine. It functions in the pathway cofactor biosynthesis; biotin biosynthesis. In terms of biological role, converts the free carboxyl group of a malonyl-thioester to its methyl ester by transfer of a methyl group from S-adenosyl-L-methionine (SAM). It allows to synthesize pimeloyl-ACP via the fatty acid synthetic pathway. The sequence is that of Malonyl-[acyl-carrier protein] O-methyltransferase from Buchnera aphidicola subsp. Baizongia pistaciae (strain Bp).